Reading from the N-terminus, the 73-residue chain is MKRDIHPEYVETQVSCTCGASFTTRSTISSGTVRAEVCSECHPFYTGKQKILDTGGRVARFEARFGKAAAAKK.

4 residues coordinate Zn(2+): C16, C18, C38, and C41.

It belongs to the bacterial ribosomal protein bL31 family. Type A subfamily. In terms of assembly, part of the 50S ribosomal subunit. It depends on Zn(2+) as a cofactor.

Binds the 23S rRNA. In Streptomyces avermitilis (strain ATCC 31267 / DSM 46492 / JCM 5070 / NBRC 14893 / NCIMB 12804 / NRRL 8165 / MA-4680), this protein is Large ribosomal subunit protein bL31.